The chain runs to 457 residues: NAC domain-containing protein 69 (457 aa).

The NAC domain occupies 4–153 (DLVGYRFYPT…NYVICQVMYK (150 aa)). Residues 107-159 (IGIKKTLVYYEGRVPKGVWTPWVMHEYHITCLPQDQRNYVICQVMYKGEDGDV) mediate DNA binding. Disordered stretches follow at residues 158 to 180 (DVPS…SNTV) and 302 to 332 (DSNS…SNRQ). Residues 162-180 (GGNNSSEPSQSLVSDSNTV) are compositionally biased toward polar residues. The span at 302-311 (DSNSDAESIS) shows a compositional bias: low complexity. Over residues 312-332 (ATSYQGTSSPGDDSVGSSNRQ) the composition is skewed to polar residues. The chain crosses the membrane as a helical span at residues 421–441 (IYLMRMIIGFILLLALISNII).

The protein localises to the membrane. It localises to the nucleus. Its function is as follows. Transcription activator activated by proteolytic cleavage through regulated intramembrane proteolysis (RIP). Involved in salt stress response during seed germination and seedling growth. Binds the auxin-responsive IAA30 gene promoter and may serve as a molecular link that interconnects a developmental feedback loop of auxin signaling with a salt signal transduction pathway during seed germination. This is NAC domain-containing protein 69 (NAC69) from Arabidopsis thaliana (Mouse-ear cress).